A 344-amino-acid chain; its full sequence is Thioredoxin domain-containing protein 15 (344 aa).

Residues 1-20 (MQLLCWWQVLLWVLGLPAHG) form the signal peptide. Over 21 to 305 (LEVAEDSGHP…GPLPSTLIKT (285 aa)) the chain is Extracellular. 2 disordered regions span residues 55–119 (DHRD…FGLQ) and 136–156 (GVTEAEPVATEDANSTDSLKS). Residues 88 to 97 (EDQRSPEAHD) show a composition bias toward basic and acidic residues. The 118-residue stretch at 163 to 280 (ERNVTGLENF…LKIFIFNQTG (118 aa)) folds into the Thioredoxin domain. 4 N-linked (GlcNAc...) asparagine glycosylation sites follow: Asn171, Asn178, Asn190, and Asn277. The helical transmembrane segment at 306 to 326 (VDWLLVFSLFFLISFIMYATI) threads the bilayer. Topologically, residues 327 to 344 (RTESIRWLIPGQEQEHAE) are cytoplasmic.

The protein resides in the cell projection. The protein localises to the cilium membrane. In terms of biological role, acts as a positive regulator of ciliary hedgehog signaling. Required for cilia biogenesis. In Mus musculus (Mouse), this protein is Thioredoxin domain-containing protein 15 (Txndc15).